The chain runs to 156 residues: Endoribonuclease YbeY (156 aa).

3 residues coordinate Zn(2+): His115, His119, and His125.

Belongs to the endoribonuclease YbeY family. Requires Zn(2+) as cofactor.

It is found in the cytoplasm. Its function is as follows. Single strand-specific metallo-endoribonuclease involved in late-stage 70S ribosome quality control and in maturation of the 3' terminus of the 16S rRNA. The polypeptide is Endoribonuclease YbeY (Mannheimia succiniciproducens (strain KCTC 0769BP / MBEL55E)).